We begin with the raw amino-acid sequence, 67 residues long: Moricin (67 aa).

The signal sequence occupies residues Met-1–Ala-23.

This sequence belongs to the moricin family. Monomer.

It localises to the secreted. Its function is as follows. Antimicrobial peptide. Active against a broad spectrum of Gram-positive and Gram-negative bacteria including methicillin-resistant S.aureus ATCC 43 300, S.aureus BAA-39, pathogenic strains of L.monocytogenes, K.pneumoniae, E.coli O157:H7, S.typhimurium and multidrug-resistant S.typhimurium DT104 with minimum inhibitory concentration (MIC) of 1.4 uM for all except for S.aureus BAA-39. Also active against Serratia marcescens. Probably acts by disturbing membrane functions with its amphipathic alpha-helical structure. May protect a developing embryo from bacterial infection. The chain is Moricin from Manduca sexta (Tobacco hawkmoth).